Here is a 340-residue protein sequence, read N- to C-terminus: NADH-quinone oxidoreductase subunit H (340 aa).

A run of 8 helical transmembrane segments spans residues 4-24, 78-98, 113-133, 151-171, 184-204, 244-264, 273-293, and 316-336; these read TIGI…PLLI, YLFV…WAVI, VLYL…AGWA, VSYE…AGSM, MLHW…IAGI, SMIL…LSPF, IFFV…FLFV, and VLIP…VAHV.

It belongs to the complex I subunit 1 family. As to quaternary structure, NDH-1 is composed of 14 different subunits. Subunits NuoA, H, J, K, L, M, N constitute the membrane sector of the complex.

Its subcellular location is the cell inner membrane. It catalyses the reaction a quinone + NADH + 5 H(+)(in) = a quinol + NAD(+) + 4 H(+)(out). Its function is as follows. NDH-1 shuttles electrons from NADH, via FMN and iron-sulfur (Fe-S) centers, to quinones in the respiratory chain. The immediate electron acceptor for the enzyme in this species is believed to be ubiquinone. Couples the redox reaction to proton translocation (for every two electrons transferred, four hydrogen ions are translocated across the cytoplasmic membrane), and thus conserves the redox energy in a proton gradient. This subunit may bind ubiquinone. In Legionella pneumophila (strain Corby), this protein is NADH-quinone oxidoreductase subunit H.